Consider the following 643-residue polypeptide: Threonine--tRNA ligase (643 aa).

In terms of domain architecture, TGS spans 1–61 (MPTIKFIDGT…TNDSIVKFVY (61 aa)). Residues 244 to 535 (DHRKISKILD…LIEEYIGNFP (292 aa)) are catalytic. Zn(2+) is bound by residues cysteine 335, histidine 386, and histidine 512.

Belongs to the class-II aminoacyl-tRNA synthetase family. As to quaternary structure, homodimer. Requires Zn(2+) as cofactor.

The protein localises to the cytoplasm. It catalyses the reaction tRNA(Thr) + L-threonine + ATP = L-threonyl-tRNA(Thr) + AMP + diphosphate + H(+). Functionally, catalyzes the attachment of threonine to tRNA(Thr) in a two-step reaction: L-threonine is first activated by ATP to form Thr-AMP and then transferred to the acceptor end of tRNA(Thr). Also edits incorrectly charged L-seryl-tRNA(Thr). This is Threonine--tRNA ligase from Buchnera aphidicola subsp. Baizongia pistaciae (strain Bp).